The following is a 231-amino-acid chain: 2-hydroxy-3-keto-5-methylthiopentenyl-1-phosphate phosphatase (231 aa).

Belongs to the HAD-like hydrolase superfamily. MtnX family.

It catalyses the reaction 2-hydroxy-5-methylsulfanyl-3-oxopent-1-enyl phosphate + H2O = 1,2-dihydroxy-5-(methylsulfanyl)pent-1-en-3-one + phosphate. It functions in the pathway amino-acid biosynthesis; L-methionine biosynthesis via salvage pathway; L-methionine from S-methyl-5-thio-alpha-D-ribose 1-phosphate: step 4/6. Dephosphorylates 2-hydroxy-3-keto-5-methylthiopentenyl-1-phosphate (HK-MTPenyl-1-P) yielding 1,2-dihydroxy-3-keto-5-methylthiopentene (DHK-MTPene). The sequence is that of 2-hydroxy-3-keto-5-methylthiopentenyl-1-phosphate phosphatase from Bacillus pumilus (strain SAFR-032).